Reading from the N-terminus, the 540-residue chain is Glucose-6-phosphate isomerase (540 aa).

Glu346 (proton donor) is an active-site residue. Residues His377 and Lys505 contribute to the active site.

Belongs to the GPI family.

The protein resides in the cytoplasm. The catalysed reaction is alpha-D-glucose 6-phosphate = beta-D-fructose 6-phosphate. The protein operates within carbohydrate biosynthesis; gluconeogenesis. It functions in the pathway carbohydrate degradation; glycolysis; D-glyceraldehyde 3-phosphate and glycerone phosphate from D-glucose: step 2/4. Its function is as follows. Catalyzes the reversible isomerization of glucose-6-phosphate to fructose-6-phosphate. In Francisella tularensis subsp. tularensis (strain SCHU S4 / Schu 4), this protein is Glucose-6-phosphate isomerase.